The primary structure comprises 230 residues: Bidirectional sugar transporter SWEET16 (230 aa).

Over 1 to 3 (MAD) the chain is Extracellular. Residues 4–24 (LSFYVGVIGNVISVLVFLSPV) traverse the membrane as a helical segment. Positions 6–92 (FYVGVIGNVI…LIFLFFVPKS (87 aa)) constitute a MtN3/slv 1 domain. At 25-40 (ETFWRIVQRRSTEEYE) the chain is on the cytoplasmic side. A helical transmembrane segment spans residues 41-61 (CFPYICTLMSSSLWTYYGIVT). The Extracellular portion of the chain corresponds to 62–69 (PGEYLVST). The chain crosses the membrane as a helical span at residues 70–90 (VNGFGALAESIYVLIFLFFVP). Over 91 to 93 (KSR) the chain is Cytoplasmic. A helical transmembrane segment spans residues 94–114 (FLKTVVVVLALNVCFPVIAIA). Residues 115–128 (GTRTLFGDANSRSS) are Extracellular-facing. Residues 129-149 (SMGFICATLNIIMYGSPLSAI) form a helical membrane-spanning segment. The MtN3/slv 2 domain maps to 129–212 (SMGFICATLN…LLIYAYYRNA (84 aa)). The Cytoplasmic segment spans residues 150-162 (KTVVTTRSVQFMP). Residues 163–183 (FWLSFFLFLNGAIWGVYALLL) form a helical membrane-spanning segment. The Extracellular portion of the chain corresponds to 184–185 (HD). Residues 186–206 (MFLLVPNGMGFFLGIMQLLIY) traverse the membrane as a helical segment. At 207 to 230 (AYYRNAEPIVEDEEGLIPNQPLLA) the chain is on the cytoplasmic side.

This sequence belongs to the SWEET sugar transporter family. Forms homooligomers and heterooligomers with SWEET1, SWEET7, SWEET8, SWEET9 and SWEET17. Mostly expressed in the cortex of mature roots, and, to a lower extent, in aerial organs such as leaves, stems, and flowers. Mainly present in vascular parenchyma cells, especially in the petiole vasculature, flower stalks and at the base of individual, not fully developed flowers.

Its subcellular location is the vacuole membrane. In terms of biological role, mediates both low-affinity uptake and efflux of sugar across the vacuolar membrane. Regulates sugars homeostasis in leaves and roots by exporting/importing them through the tonoplast regarding metabolic demand. Acts as a vacuolar hexose transporter, such as glucose (Glc), fructose (Fru), and sucrose (Suc). The protein is Bidirectional sugar transporter SWEET16 of Arabidopsis thaliana (Mouse-ear cress).